The following is a 245-amino-acid chain: tRNA pseudouridine synthase A (245 aa).

Residue Asp-52 is the Nucleophile of the active site. Tyr-111 is a substrate binding site.

This sequence belongs to the tRNA pseudouridine synthase TruA family. In terms of assembly, homodimer.

It catalyses the reaction uridine(38/39/40) in tRNA = pseudouridine(38/39/40) in tRNA. In terms of biological role, formation of pseudouridine at positions 38, 39 and 40 in the anticodon stem and loop of transfer RNAs. The protein is tRNA pseudouridine synthase A of Rickettsia akari (strain Hartford).